We begin with the raw amino-acid sequence, 438 residues long: Porin AaxA (438 aa).

The signal sequence occupies residues 1 to 21 (MISFRFLLLSGLCALGISSYA).

It belongs to the OprB family.

The protein resides in the cell outer membrane. Functionally, facilitates L-arginine uptake, as part of the AaxABC system. The arginine uptake by the bacterium in the macrophage may be a virulence factor against the host innate immune response. This is Porin AaxA (aaxA) from Chlamydia pneumoniae (Chlamydophila pneumoniae).